The sequence spans 335 residues: Pyridoxal 5'-phosphate synthase subunit PdxS (335 aa).

Asp30 serves as a coordination point for D-ribose 5-phosphate. The active-site Schiff-base intermediate with D-ribose 5-phosphate is the Lys87. A D-ribose 5-phosphate-binding site is contributed by Gly159. Arg171 provides a ligand contact to D-glyceraldehyde 3-phosphate. D-ribose 5-phosphate contacts are provided by residues Gly257 and 278-279; that span reads GS.

The protein belongs to the PdxS/SNZ family. Homohexamer. In the presence of PdxT, forms a dodecamer of heterodimers.

It carries out the reaction aldehydo-D-ribose 5-phosphate + D-glyceraldehyde 3-phosphate + L-glutamine = pyridoxal 5'-phosphate + L-glutamate + phosphate + 3 H2O + H(+). It functions in the pathway cofactor biosynthesis; pyridoxal 5'-phosphate biosynthesis. Catalyzes the formation of pyridoxal 5'-phosphate from ribose 5-phosphate (RBP), glyceraldehyde 3-phosphate (G3P) and ammonia. The ammonia is provided by the PdxT subunit. Can also use ribulose 5-phosphate and dihydroxyacetone phosphate as substrates, resulting from enzyme-catalyzed isomerization of RBP and G3P, respectively. The chain is Pyridoxal 5'-phosphate synthase subunit PdxS from Pyrococcus horikoshii (strain ATCC 700860 / DSM 12428 / JCM 9974 / NBRC 100139 / OT-3).